Consider the following 351-residue polypeptide: Uroporphyrinogen decarboxylase (351 aa).

Substrate contacts are provided by residues 25-29 (RQAGR), Asp-74, Tyr-151, Ser-206, and His-325.

This sequence belongs to the uroporphyrinogen decarboxylase family. As to quaternary structure, homodimer.

It localises to the cytoplasm. The catalysed reaction is uroporphyrinogen III + 4 H(+) = coproporphyrinogen III + 4 CO2. It participates in porphyrin-containing compound metabolism; protoporphyrin-IX biosynthesis; coproporphyrinogen-III from 5-aminolevulinate: step 4/4. Catalyzes the decarboxylation of four acetate groups of uroporphyrinogen-III to yield coproporphyrinogen-III. The protein is Uroporphyrinogen decarboxylase of Chlorobium luteolum (strain DSM 273 / BCRC 81028 / 2530) (Pelodictyon luteolum).